We begin with the raw amino-acid sequence, 243 residues long: Uridylate kinase (243 aa).

18–21 (KLGG) provides a ligand contact to ATP. A UMP-binding site is contributed by G59. ATP-binding residues include G60 and R64. UMP-binding positions include D79 and 140–147 (MGMPYFST). Residues Y173 and D176 each contribute to the ATP site.

It belongs to the UMP kinase family. In terms of assembly, homohexamer.

It is found in the cytoplasm. It catalyses the reaction UMP + ATP = UDP + ADP. It participates in pyrimidine metabolism; CTP biosynthesis via de novo pathway; UDP from UMP (UMPK route): step 1/1. Its activity is regulated as follows. Inhibited by UTP. In terms of biological role, catalyzes the reversible phosphorylation of UMP to UDP. The chain is Uridylate kinase from Corynebacterium diphtheriae (strain ATCC 700971 / NCTC 13129 / Biotype gravis).